We begin with the raw amino-acid sequence, 258 residues long: Acyl-[acyl-carrier-protein]--UDP-N-acetylglucosamine O-acyltransferase (258 aa).

This sequence belongs to the transferase hexapeptide repeat family. LpxA subfamily. Homotrimer.

It localises to the cytoplasm. It catalyses the reaction a (3R)-hydroxyacyl-[ACP] + UDP-N-acetyl-alpha-D-glucosamine = a UDP-3-O-[(3R)-3-hydroxyacyl]-N-acetyl-alpha-D-glucosamine + holo-[ACP]. It functions in the pathway glycolipid biosynthesis; lipid IV(A) biosynthesis; lipid IV(A) from (3R)-3-hydroxytetradecanoyl-[acyl-carrier-protein] and UDP-N-acetyl-alpha-D-glucosamine: step 1/6. In terms of biological role, involved in the biosynthesis of lipid A, a phosphorylated glycolipid that anchors the lipopolysaccharide to the outer membrane of the cell. This is Acyl-[acyl-carrier-protein]--UDP-N-acetylglucosamine O-acyltransferase from Alkalilimnicola ehrlichii (strain ATCC BAA-1101 / DSM 17681 / MLHE-1).